We begin with the raw amino-acid sequence, 46 residues long: Crambin (46 aa).

Intrachain disulfides connect Cys3-Cys40, Cys4-Cys32, and Cys16-Cys26.

It belongs to the plant thionin (TC 1.C.44) family.

The protein resides in the secreted. Functionally, the function of this hydrophobic plant seed protein is not known. This chain is Crambin (THI2), found in Crambe hispanica subsp. abyssinica (Abyssinian kale).